Here is a 206-residue protein sequence, read N- to C-terminus: Large ribosomal subunit protein uL3 (206 aa).

Positions 127–151 (SGGPSSHGSKFHRHLGGTGQATTPA) are disordered.

It belongs to the universal ribosomal protein uL3 family. As to quaternary structure, part of the 50S ribosomal subunit. Forms a cluster with proteins L14 and L19.

One of the primary rRNA binding proteins, it binds directly near the 3'-end of the 23S rRNA, where it nucleates assembly of the 50S subunit. The sequence is that of Large ribosomal subunit protein uL3 from Borreliella burgdorferi (strain ATCC 35210 / DSM 4680 / CIP 102532 / B31) (Borrelia burgdorferi).